The primary structure comprises 1902 residues: PII-type proteinase (1902 aa).

The N-terminal stretch at 1–33 (MQRKKKGLSILLAGTVALGALAVLPVGEIQAKA) is a signal peptide. A propeptide spanning residues 34–187 (AISQQTKVSS…VTLAKVYYPT (154 aa)) is cleaved from the precursor. The Peptidase S8 domain maps to 191-697 (ANSMANVQAV…AGLVDVKAAI (507 aa)). Residues D217, H281, and S620 each act as charge relay system in the active site. The segment covering 1793 to 1805 (KTAGKGDDTTGTS) has biased composition (low complexity). Positions 1793 to 1872 (KTAGKGDDTT…GKGALPKTAE (80 aa)) are disordered. An LPXTG sorting signal motif is present at residues 1867-1871 (LPKTA). T1870 is subject to Pentaglycyl murein peptidoglycan amidated threonine. Residues 1871–1902 (AETTERPAFGFLGVIVVSLMGVLGLKRKQREE) constitute a propeptide, removed by sortase.

It belongs to the peptidase S8 family.

Its subcellular location is the secreted. The protein resides in the cell wall. It carries out the reaction Endopeptidase activity with very broad specificity, although some subsite preference have been noted, e.g. large hydrophobic residues in the P1 and P4 positions, and Pro in the P2 position. Best known for its action on caseins, although it has been shown to hydrolyze hemoglobin and oxidized insulin B-chain.. Functionally, protease which breaks down milk proteins during the growth of the bacteria on milk. This Lacticaseibacillus paracasei (Lactobacillus paracasei) protein is PII-type proteinase (prtP).